The primary structure comprises 548 residues: Tripartite motif-containing protein 55 (548 aa).

The segment at 10–66 adopts an RING-type zinc-finger fold; sequence FSKEQQTMDNLEKQLICPICLEMFTKPVVILPCQHNLCRKCASDIFQASNPYLPTRG. The B box-type zinc finger occupies 103 to 145; that stretch reads NIIDIYKQESTRPEKKSDQPMCEEHEEERINIYCLNCEVPTCS. Zn(2+) is bound by residues Cys-124, His-127, Cys-147, and His-153. Residues 168-248 adopt a coiled-coil conformation; the sequence is QKSELSDGIA…EKLEHVRALI (81 aa). Positions 269 to 327 constitute a COS domain; that stretch reads MDEPEMAVFLQNAKTLLKKISEASKAFQMEKIEHGYENMNHFTVNLNREEKIIREIDFY. The disordered stretch occupies residues 326–532; that stretch reads FYREDEDEEE…PASGSGADSE (207 aa). Composition is skewed to acidic residues over residues 328–339 and 347–360; these read REDEDEEEEEGG and GEVG…EEVE. Composition is skewed to low complexity over residues 484 to 496 and 512 to 531; these read VAAA…AAVS and EAPP…GADS.

In terms of assembly, homooligomer and heterooligomer. Interacts with titin/TTN. Interacts with myosins. Interacts with SQSTM1 and NBR1. Isoform 4 may not able to interact with isoform 1, isoform 2 and isoform 3. Probably interacts with TRIM63 and TRIM54. Post-translationally, targeted for degradation through the proteasomal and lysosomal pathways in the presence of SUMO3. Highly expressed in muscle. Low-level expression in liver.

Its subcellular location is the nucleus. The protein localises to the cytoplasm. It carries out the reaction S-ubiquitinyl-[E2 ubiquitin-conjugating enzyme]-L-cysteine + [acceptor protein]-L-lysine = [E2 ubiquitin-conjugating enzyme]-L-cysteine + N(6)-ubiquitinyl-[acceptor protein]-L-lysine.. E3 ubiquitin ligase that plays an important role in regulating cardiac development and contractility, muscle growth, metabolism, and fiber-type differentiation. Acts as a critical factor that regulates cardiomyocyte size during development in concert with TRIM63 by regulating E2F1-mediated gene expression. Plays a role in apoptosis induction in cardiomyocytes by promoting ubiquitination of the DUSP1 phosphatase. Promotes non-canonical NF-kappa-B signaling and B-cell-mediated immune responses by mediating NFKB2 'Lys-48'-linked ubiquitination and processing. In turn, NFKB2 is further processed by valosin-containing protein/VCP, an ATPase that mediates ubiquitin-dependent protein degradation by the proteasome. May play a role in preventing macrophages from producing inflammatory factors and migrating by downregulating the level of nuclear NF-kappa-B subunit RELA. Also modifies PPARG via polyubiquitination and accelerates PPARG proteasomal degradation to inhibit its activity. The chain is Tripartite motif-containing protein 55 (TRIM55) from Homo sapiens (Human).